The sequence spans 102 residues: ATP-dependent Clp protease adapter protein ClpS (102 aa).

The protein belongs to the ClpS family. As to quaternary structure, binds to the N-terminal domain of the chaperone ClpA.

In terms of biological role, involved in the modulation of the specificity of the ClpAP-mediated ATP-dependent protein degradation. In Shewanella oneidensis (strain ATCC 700550 / JCM 31522 / CIP 106686 / LMG 19005 / NCIMB 14063 / MR-1), this protein is ATP-dependent Clp protease adapter protein ClpS.